Consider the following 197-residue polypeptide: Cytochrome c oxidase polypeptide 5, mitochondrial (197 aa).

A mitochondrion-targeting transit peptide spans 1–13 (MFLRSVTRAAARS). Topologically, residues 14-129 (SAVPTTGLRS…KGENLKIFFK (116 aa)) are mitochondrial matrix. The helical transmembrane segment at 130 to 147 (VAQLTLVSFGIFYVIHLF) threads the bilayer. Topologically, residues 148 to 197 (AKPQPKTMTKEWQEASNEYAKQEKINPIYGISAEGYEGKGFVQSPPAEKQ) are mitochondrial intermembrane.

It belongs to the cytochrome c oxidase IV family. In terms of assembly, component of the cytochrome c oxidase (complex IV, CIV), a multisubunit enzyme composed of a catalytic core of 3 subunits and seevral supernumerary subunits. The complex exists as a monomer or a dimer and forms supercomplexes (SCs) in the inner mitochondrial membrane with ubiquinol-cytochrome c oxidoreductase (cytochrome b-c1 complex, complex III, CIII).

It localises to the mitochondrion inner membrane. It functions in the pathway energy metabolism; oxidative phosphorylation. Component of the cytochrome c oxidase, the last enzyme in the mitochondrial electron transport chain which drives oxidative phosphorylation. The respiratory chain contains 3 multisubunit complexes succinate dehydrogenase (complex II, CII), ubiquinol-cytochrome c oxidoreductase (cytochrome b-c1 complex, complex III, CIII) and cytochrome c oxidase (complex IV, CIV), that cooperate to transfer electrons derived from NADH and succinate to molecular oxygen, creating an electrochemical gradient over the inner membrane that drives transmembrane transport and the ATP synthase. Cytochrome c oxidase is the component of the respiratory chain that catalyzes the reduction of oxygen to water. Electrons originating from reduced cytochrome c in the intermembrane space (IMS) are transferred via the dinuclear copper A center (CU(A)) of subunit 2 and heme A of subunit 1 to the active site in subunit 1, a binuclear center (BNC) formed by heme A3 and copper B (CU(B)). The BNC reduces molecular oxygen to 2 water molecules using 4 electrons from cytochrome c in the IMS and 4 protons from the mitochondrial matrix. In Aspergillus niger, this protein is Cytochrome c oxidase polypeptide 5, mitochondrial (cox5).